Here is a 574-residue protein sequence, read N- to C-terminus: NEDD4-binding protein 2-like 2 (574 aa).

Disordered stretches follow at residues 82–110 (HKEM…LAPA), 127–161 (YKPP…QKFN), 182–204 (ENEN…QTLS), and 542–574 (TQKS…TDDY). Basic and acidic residues-rich tracts occupy residues 129–141 (PPEK…RKNE) and 149–161 (DSKR…QKFN). Residues 162 to 196 (SKKLEIDTELSQFYKEIEELENENEASQGSCKEPE) adopt a coiled-coil conformation. Over residues 563–574 (GSHSQVSITDDY) the composition is skewed to polar residues.

The polypeptide is NEDD4-binding protein 2-like 2 (N4bp2l2) (Rattus norvegicus (Rat)).